Reading from the N-terminus, the 629-residue chain is tRNA uridine 5-carboxymethylaminomethyl modification enzyme MnmG (629 aa).

13–18 provides a ligand contact to FAD; sequence GGGHAG. An NAD(+)-binding site is contributed by 273–287; it reads GPRYCPSIEDKIHRF.

This sequence belongs to the MnmG family. As to quaternary structure, homodimer. Heterotetramer of two MnmE and two MnmG subunits. FAD serves as cofactor.

Its subcellular location is the cytoplasm. In terms of biological role, NAD-binding protein involved in the addition of a carboxymethylaminomethyl (cmnm) group at the wobble position (U34) of certain tRNAs, forming tRNA-cmnm(5)s(2)U34. The protein is tRNA uridine 5-carboxymethylaminomethyl modification enzyme MnmG of Shewanella baltica (strain OS185).